A 141-amino-acid polypeptide reads, in one-letter code: Extracellular globin-1 (141 aa).

A Globin domain is found at 1-141 (DCNTLKRFKV…YAVIAAGIKP (141 aa)). Cysteine 2 and cysteine 131 are joined by a disulfide. Position 94 (histidine 94) interacts with heme b.

It belongs to the globin family. In terms of assembly, the giant hemoglobins of worms are formed of a monomeric subunit and a disulfide-bonded trimer. This subunit is monomeric.

It is found in the secreted. This is Extracellular globin-1 from Metaphire sieboldi (Earthworm).